Here is a 213-residue protein sequence, read N- to C-terminus: MTIDLIDFKMTKEGLVLVIKDYDNLEDVVNQLTSKISQMSGFFAAGDKIMLMIENNEKHSHDMPRIISILKKMGIEVSQILMGVTAKEGINVRGRMKMVEEGETKSGTKVVKKNLRSGQALVHSGDVIVIGNVHSGAEIMAGGSIVVFGNVKGILRAGLNESDSIVAALSMEPSLIQISEYILREAGSYDEPVVVHVKQNKIVIESAKDVKFQ.

The protein belongs to the MinC family. In terms of assembly, interacts with MinD and FtsZ.

Its function is as follows. Cell division inhibitor that blocks the formation of polar Z ring septums. Rapidly oscillates between the poles of the cell to destabilize FtsZ filaments that have formed before they mature into polar Z rings. Prevents FtsZ polymerization. This is Probable septum site-determining protein MinC from Pseudothermotoga lettingae (strain ATCC BAA-301 / DSM 14385 / NBRC 107922 / TMO) (Thermotoga lettingae).